Reading from the N-terminus, the 263-residue chain is Oncostatin-M (263 aa).

Positions 1–24 (MQTRLLRTLLSLTLSLLILSMALA) are cleaved as a signal peptide. 2 disulfide bridges follow: Cys-28/Cys-139 and Cys-71/Cys-177. N-linked (GlcNAc...) asparagine glycosylation is found at Asn-30, Asn-44, and Asn-145. A propeptide spanning residues 207 to 263 (QSPLRARRKGTRRIRVRHKGTRRIRVRRKGTRRIWVRRKGSRKIRPSRSTQSPTTRA) is cleaved from the precursor. Positions 241–252 (WVRRKGSRKIRP) are enriched in basic residues. Residues 241–263 (WVRRKGSRKIRPSRSTQSPTTRA) are disordered. Residues 253 to 263 (SRSTQSPTTRA) show a composition bias toward polar residues.

The protein belongs to the LIF/OSM family. Post-translationally, propeptide processing is not important for receptor binding activity but may be important growth-inhibitory activity.

It localises to the secreted. In terms of biological role, growth regulator. Inhibits the proliferation of a number of tumor cell lines. It regulates cytokine production, including IL-6, G-CSF and GM-CSF from endothelial cells. Uses only type II OSM receptor (heterodimers composed of OSMR and IL6ST). Involved in the maturation of fetal hepatocytes, thereby promoting liver development and regeneration. The chain is Oncostatin-M (Osm) from Mus musculus (Mouse).